The sequence spans 770 residues: PH and SEC7 domain-containing protein 2 (770 aa).

Positions 1–24 (MDEEKLPCELHKEGSATQEDHGLE) are enriched in basic and acidic residues. Disordered regions lie at residues 1–65 (MDEE…RGPD) and 181–304 (IQQR…ANGC). Residues 32-45 (QNGTAASEGLSSHI) show a composition bias toward polar residues. Phosphoserine is present on Ser188. Composition is skewed to low complexity over residues 216 to 234 (LGSP…NVLS) and 285 to 296 (ELSSSEGLEPGS). The region spanning 256-459 (DDEDDEDTDK…KTLYNSIKNE (204 aa)) is the SEC7 domain. In terms of domain architecture, PH spans 509–622 (TTYKHGVLTR…WILRINLVAA (114 aa)). The helical transmembrane segment at 619–636 (LVAAIFSAPAFPAAVSSM) threads the bilayer. A coiled-coil region spans residues 650–677 (RLCQEEQLRSHENKLRQVTAELAEHRCH). Residues 738–770 (PALRKTHSSPALSLGHGPVTGSKATKDTSASDT) are disordered.

The protein belongs to the PSD family.

The protein resides in the cell membrane. It is found in the cell projection. It localises to the ruffle membrane. The protein localises to the cleavage furrow. This chain is PH and SEC7 domain-containing protein 2 (Psd2), found in Mus musculus (Mouse).